A 396-amino-acid polypeptide reads, in one-letter code: 3-hydroxykynurenine transaminase (396 aa).

The segment at 43-44 is binds to and confers specificity for 3-hydroxykynurenine; shared with dimeric partner; sequence SN. Pyridoxal 5'-phosphate-binding positions include 77–79, Ser154, and Gln204; that span reads SAH. Residue Ser154 coordinates substrate. An N6-(pyridoxal phosphate)lysine modification is found at Lys205. Pyridoxal 5'-phosphate contacts are provided by Tyr256 and Thr259. Arg356 provides a ligand contact to substrate.

This sequence belongs to the class-V pyridoxal-phosphate-dependent aminotransferase family. Homodimer. Pyridoxal 5'-phosphate is required as a cofactor. As to expression, expressed in gut and ovaries.

It is found in the peroxisome. The enzyme catalyses L-kynurenine + glyoxylate = kynurenate + glycine + H2O. The catalysed reaction is 3-hydroxy-L-kynurenine + glyoxylate = xanthurenate + glycine + H2O. It carries out the reaction 3-hydroxy-L-kynurenine + pyruvate = xanthurenate + L-alanine + H2O. It catalyses the reaction glyoxylate + L-alanine = glycine + pyruvate. It functions in the pathway amino-acid degradation; L-kynurenine degradation; kynurenate from L-kynurenine: step 1/2. Its function is as follows. Catalyzes the pyridoxal 5'-phosphate-dependent transamination of both 3-hydroxykynurenine and L-kynurenine to xanthurenic acid and kynurenic acid, respectively, preferentially using the alpha-ketoacid glyoxylate as the amino group acceptor. Although glyoxylate is the preferred amino group acceptor, transamination of 3-hydroxykynurenine also works with pyruvate as the amino acceptor in vitro. Involved in the detoxification of cytotoxic metabolite 3-hydroxykynurenine generated by the hydroxylation of L-kynurenine, an intermediate in the tryptophan catabolism pathway. The Plasmodium parasite uses xanthurenic acid produced in the midgut to activate its gametocytes ingested during a blood meal. Also catalyzes, although with a lesser efficiency, the transamination of alanine with glyoxylate as an amino group acceptor. May play a role in the detoxification of glyoxylate, a toxic plant metabolite from the diet. This Anopheles gambiae (African malaria mosquito) protein is 3-hydroxykynurenine transaminase.